Consider the following 463-residue polypeptide: tRNA-2-methylthio-N(6)-dimethylallyladenosine synthase (463 aa).

An MTTase N-terminal domain is found at 5–125; it reads RKLHIKSYGC…LPQLLAKAEQ (121 aa). [4Fe-4S] cluster-binding residues include Cys14, Cys50, Cys88, Cys166, Cys170, and Cys173. In terms of domain architecture, Radical SAM core spans 152–384; that stretch reads RARGISAFVT…QQLIDQQQSA (233 aa). The TRAM domain occupies 387–449; sequence KAAIGRTVEV…RYSLLGELAS (63 aa).

This sequence belongs to the methylthiotransferase family. MiaB subfamily. As to quaternary structure, monomer. Requires [4Fe-4S] cluster as cofactor.

It is found in the cytoplasm. The catalysed reaction is N(6)-dimethylallyladenosine(37) in tRNA + (sulfur carrier)-SH + AH2 + 2 S-adenosyl-L-methionine = 2-methylsulfanyl-N(6)-dimethylallyladenosine(37) in tRNA + (sulfur carrier)-H + 5'-deoxyadenosine + L-methionine + A + S-adenosyl-L-homocysteine + 2 H(+). Catalyzes the methylthiolation of N6-(dimethylallyl)adenosine (i(6)A), leading to the formation of 2-methylthio-N6-(dimethylallyl)adenosine (ms(2)i(6)A) at position 37 in tRNAs that read codons beginning with uridine. This chain is tRNA-2-methylthio-N(6)-dimethylallyladenosine synthase, found in Rhodopseudomonas palustris (strain TIE-1).